Consider the following 294-residue polypeptide: Protein CHLOROPLAST J-LIKE DOMAIN 1, chloroplastic (294 aa).

Residues 1-58 (MAPALSTSCSSVMAFSTSNALRYHHPQISLRNSLRAPKSPSFVRLPLGKVLQSRIVIR) constitute a chloroplast transit peptide. The Stromal portion of the chain corresponds to 59–164 (AASSAAGNPQ…GPRFSRSSKN (106 aa)). A J-like domain region spans residues 74 to 152 (NPYEVLGVNP…IKYADKQPII (79 aa)). Residues 165-182 (DMLINLAISVVFSAWIAI) form a helical membrane-spanning segment. Over 183-233 (KRNVEYKPLQFMSFVFVYRIFEKLKSFEAPSSPIYNEEGEESGRGLRMGKR) the chain is Chloroplast intermembrane. Residues 234–256 (LLRSLSLVFGSILLASLAYTGFL) traverse the membrane as a helical segment. Residues 257-275 (NGIEYMGYSIPMVLYNNQE) are Stromal-facing. A helical membrane pass occupies residues 276–293 (LIVTASSAFMLYVIASFY). Residue Arg-294 is a topological domain, chloroplast intermembrane.

Interacts (via J-like domain) with ARC6 (via J domain).

The protein localises to the plastid. Its subcellular location is the chloroplast inner membrane. Probably involved in the regulation of the fatty acid metabolic process in chloroplasts, especially chloroplastic galactolipids monogalactosyldiacylglycerol (MGDG) and digalactosyldiacylglycerol (DGDG). The polypeptide is Protein CHLOROPLAST J-LIKE DOMAIN 1, chloroplastic (Arabidopsis thaliana (Mouse-ear cress)).